A 155-amino-acid chain; its full sequence is Ribosomal RNA large subunit methyltransferase H (155 aa).

Residues Leu72, Gly103, and 122 to 127 (LSPLTL) contribute to the S-adenosyl-L-methionine site.

Belongs to the RNA methyltransferase RlmH family. In terms of assembly, homodimer.

It localises to the cytoplasm. It carries out the reaction pseudouridine(1915) in 23S rRNA + S-adenosyl-L-methionine = N(3)-methylpseudouridine(1915) in 23S rRNA + S-adenosyl-L-homocysteine + H(+). Specifically methylates the pseudouridine at position 1915 (m3Psi1915) in 23S rRNA. The sequence is that of Ribosomal RNA large subunit methyltransferase H from Actinobacillus pleuropneumoniae serotype 3 (strain JL03).